Here is a 303-residue protein sequence, read N- to C-terminus: Methionyl-tRNA formyltransferase (303 aa).

106–109 is a (6S)-5,6,7,8-tetrahydrofolate binding site; sequence SLLP.

It belongs to the Fmt family.

The enzyme catalyses L-methionyl-tRNA(fMet) + (6R)-10-formyltetrahydrofolate = N-formyl-L-methionyl-tRNA(fMet) + (6S)-5,6,7,8-tetrahydrofolate + H(+). Its function is as follows. Attaches a formyl group to the free amino group of methionyl-tRNA(fMet). The formyl group appears to play a dual role in the initiator identity of N-formylmethionyl-tRNA by promoting its recognition by IF2 and preventing the misappropriation of this tRNA by the elongation apparatus. This is Methionyl-tRNA formyltransferase from Thermosipho melanesiensis (strain DSM 12029 / CIP 104789 / BI429).